Consider the following 190-residue polypeptide: Inosine triphosphate pyrophosphatase (190 aa).

Residue 8 to 13 coordinates ITP; the sequence is TGNANK. Mg(2+) is bound at residue glutamate 37. Residues lysine 49, 65-66, lysine 82, 140-143, lysine 163, and 168-169 each bind ITP; these read DT, FGWD, and HR.

It belongs to the HAM1 NTPase family. Homodimer. Mg(2+) serves as cofactor. Requires Mn(2+) as cofactor.

The protein resides in the cytoplasm. The protein localises to the nucleus. It carries out the reaction ITP + H2O = IMP + diphosphate + H(+). The catalysed reaction is dITP + H2O = dIMP + diphosphate + H(+). It catalyses the reaction XTP + H2O = XMP + diphosphate + H(+). In terms of biological role, pyrophosphatase that hydrolyzes non-canonical purine nucleotides such as inosine triphosphate (ITP), deoxyinosine triphosphate (dITP) or xanthosine 5'-triphosphate (XTP) to their respective monophosphate derivatives. The enzyme does not distinguish between the deoxy- and ribose forms. Probably excludes non-canonical purines from RNA and DNA precursor pools, thus preventing their incorporation into RNA and DNA and avoiding chromosomal lesions. The chain is Inosine triphosphate pyrophosphatase from Batrachochytrium dendrobatidis (strain JAM81 / FGSC 10211) (Frog chytrid fungus).